The chain runs to 315 residues: Ribosomal RNA small subunit methyltransferase H (315 aa).

S-adenosyl-L-methionine is bound by residues 33–35 (GGH), aspartate 52, phenylalanine 84, aspartate 106, and glutamine 113. Residues 295–315 (SDELEENNRSHSAKLRVAEKL) are disordered.

Belongs to the methyltransferase superfamily. RsmH family.

The protein localises to the cytoplasm. It catalyses the reaction cytidine(1402) in 16S rRNA + S-adenosyl-L-methionine = N(4)-methylcytidine(1402) in 16S rRNA + S-adenosyl-L-homocysteine + H(+). Its function is as follows. Specifically methylates the N4 position of cytidine in position 1402 (C1402) of 16S rRNA. This is Ribosomal RNA small subunit methyltransferase H from Lactobacillus gasseri (strain ATCC 33323 / DSM 20243 / BCRC 14619 / CIP 102991 / JCM 1131 / KCTC 3163 / NCIMB 11718 / NCTC 13722 / AM63).